Reading from the N-terminus, the 456-residue chain is Solute carrier family 49 member 4 homolog (456 aa).

Topologically, residues 1–29 (MGLEWSSPGERQPLLFPGGPRSPRVFGRR) are cytoplasmic. Positions 14–15 (LL) match the Di-leucine motif; mediates lysosomal localization motif. A helical transmembrane segment spans residues 30-50 (WLVLLLFSVLAFLQGLVWNSW). At 51–67 (GPIQISARTAYKFSGLD) the chain is on the lumenal side. A helical membrane pass occupies residues 68–88 (IALLVLWGPIGFLPCFLFMWL). At 89–95 (MDNRGLR) the chain is on the cytoplasmic side. The chain crosses the membrane as a helical span at residues 96-116 (ITVLLTALLMVLGAGLRCVPV). The Lumenal segment spans residues 117–123 (EDLAIRR). Residues 124 to 144 (ILIHGGQLLNGFAGPTVMNAA) form a helical membrane-spanning segment. The Cytoplasmic portion of the chain corresponds to 145–162 (PFLSTTWFAPDERATATA). Residues 163 to 183 (IASMLNYLGGACAFLVGPLVV) traverse the membrane as a helical segment. The Lumenal segment spans residues 184–207 (PAPNSTSGLLLYSGSTDAIKDRIE). An N-linked (GlcNAc...) asparagine glycan is attached at asparagine 187. The chain crosses the membrane as a helical span at residues 208-228 (AVMYAEFGIIFVVFAAILAYF). At 229 to 259 (PARPPVPPSVAAASRRLSYRTSIFRLLSNLR) the chain is on the cytoplasmic side. The chain crosses the membrane as a helical span at residues 260–280 (FLLIVLAYAIPLGFYSGWIGV). Residues 281-292 (LDLILTPVHVTQ) are Lumenal-facing. The chain crosses the membrane as a helical span at residues 293–313 (VDAGWVGFWSIVGGCVVGIAV). The Cytoplasmic portion of the chain corresponds to 314–326 (GRFADSIRGVLKP). A helical transmembrane segment spans residues 327–347 (ILLLLFSGATLSATWFTLTFL). Over 348–362 (SNVTHLPLTTATLYT) the chain is Lumenal. The N-linked (GlcNAc...) asparagine glycan is linked to asparagine 349. Residues 363 to 383 (SCILIGVFLNGTVPIFFELFV) traverse the membrane as a helical segment. Topologically, residues 384–392 (ETVYPIPEG) are cytoplasmic. A helical transmembrane segment spans residues 393–413 (IACGVVTFLSNIFMGVLLVFL). Over 414–420 (TMYQMEL) the chain is Lumenal. A helical transmembrane segment spans residues 421–441 (SWLNWCLTGSCFLSLFFIACF). Topologically, residues 442-456 (RESYDRLYLDVFVSV) are cytoplasmic.

It belongs to the major facilitator superfamily.

Its subcellular location is the lysosome membrane. The catalysed reaction is pyridoxine(out) + n H(+)(out) = pyridoxine(in) + n H(+)(in). In terms of biological role, mediates H(+)-dependent pyridoxine transport. The polypeptide is Solute carrier family 49 member 4 homolog (slc49a4) (Xenopus laevis (African clawed frog)).